Consider the following 469-residue polypeptide: Adenosylhomocysteinase (469 aa).

3 residues coordinate substrate: threonine 63, aspartate 139, and glutamate 164. Position 165-167 (165-167 (TTT)) interacts with NAD(+). Positions 194 and 198 each coordinate substrate. Residues asparagine 199, 228–233 (GYGDVG), glutamate 251, asparagine 300, 321–323 (IGH), and asparagine 375 contribute to the NAD(+) site.

It belongs to the adenosylhomocysteinase family. It depends on NAD(+) as a cofactor.

The protein resides in the cytoplasm. It carries out the reaction S-adenosyl-L-homocysteine + H2O = L-homocysteine + adenosine. Its pathway is amino-acid biosynthesis; L-homocysteine biosynthesis; L-homocysteine from S-adenosyl-L-homocysteine: step 1/1. Its function is as follows. May play a key role in the regulation of the intracellular concentration of adenosylhomocysteine. The chain is Adenosylhomocysteinase from Pseudomonas fluorescens (strain SBW25).